We begin with the raw amino-acid sequence, 682 residues long: Potassium-transporting ATPase ATP-binding subunit (682 aa).

4 helical membrane-spanning segments follow: residues 34–54, 62–82, 219–239, and 254–274; these read PVMFIVWIGSLLTTCISIAMA, ALFSAAISGWLWVTVLFANFA, IALTILLIALTIVFLLATATL, and VLVALLVCLIPTTIGGLLSAI. Asp-307 (4-aspartylphosphate intermediate) is an active-site residue. ATP contacts are provided by residues Asp-344, Glu-348, 377–384, and Lys-395; that span reads FTAQSRMS. Residues Asp-518 and Asp-522 each coordinate Mg(2+). Helical transmembrane passes span 588–608, 616–636, and 656–676; these read FAIIPAAFAATYPQLNALNIM, AILSAVIFNALIIVFLIPLAL, and IYGLGGLLVPFIGIKVIDLLL.

This sequence belongs to the cation transport ATPase (P-type) (TC 3.A.3) family. Type IA subfamily. The system is composed of three essential subunits: KdpA, KdpB and KdpC.

The protein resides in the cell inner membrane. The enzyme catalyses K(+)(out) + ATP + H2O = K(+)(in) + ADP + phosphate + H(+). In terms of biological role, part of the high-affinity ATP-driven potassium transport (or Kdp) system, which catalyzes the hydrolysis of ATP coupled with the electrogenic transport of potassium into the cytoplasm. This subunit is responsible for energy coupling to the transport system and for the release of the potassium ions to the cytoplasm. The chain is Potassium-transporting ATPase ATP-binding subunit from Escherichia coli (strain UTI89 / UPEC).